Here is a 193-residue protein sequence, read N- to C-terminus: DNA damage-inducible transcript 4-like protein (193 aa).

This sequence belongs to the DDIT4 family.

It is found in the cytoplasm. Its function is as follows. Inhibits cell growth by regulating the TOR signaling pathway upstream of the TSC1-TSC2 complex and downstream of AKT1. The sequence is that of DNA damage-inducible transcript 4-like protein (Ddit4l) from Mus musculus (Mouse).